An 827-amino-acid polypeptide reads, in one-letter code: MKLLGNSKYIFVVLLLCISVFLNGQETLDEIKYSEEVCTEQIDIHILLDGSGSIGYSNWKAHVIPMLNTLVDNLNISNDEINVSLTLFSTNSRELIKLKGYGSTSKDSLRFILAHLQNNYSPNGNTNLTSALLVVDTLINERMYRPDAIQLAIILTDGIPNDLPRSTAVVHQLKRKHVNVAIIGVGAGVNNEYNRILVGCDRYAPCPYYSSGSWNEAQNMIKPFLTKVCQEVERIAHCGKWEEWSECSTTCDEGRKIRRRQILHPGCVSEMTTPCKVRDCPQIPIPPVIPNKIPEKPSNPEEPVNPNDPNDPNNPNNPNNPNNPNNPNNPNNPNNPNNPNNPNNPNNPNNPNNPNNPNNPNNPNNPNNPNNPNNPNNPNNPNDPSNPNNPNPKKRNPKRRNPNKPKPNKPNPNKPNPNEPSNPNKPNPNEPSNPNKPNPNEPSNPNKPNPNEPSNPNKPNPNEPLNPNEPSNPNEPSNPNAPSNPNEPSNPNEPSNPNEPSNPNEPSNPNEPSNPKKPSNPNEPSNPNEPLNPNEPSNPNEPSNPNEPSNPEEPSNPKEPSNPNEPSNPEEPNPEEPSNPKEPSNPEEPINPEELNPKEPSNPEESNPKEPINPEESNPKEPINPEDNENPLIIQDEPIEPRNDSNVIPILPIIPQKGNNIPSNLPENPSDSEVEYPRPNDNGENSNNTMKSKKNIPNEPIPSPGDNPYKGHEERIPKPHRSNDDYVYDNNVNKNNKDEPEIPNNEYEEDKNKNQSKSNNGYKIAGGIIGGLAILGCAGVGYNFIAGSSAAGLAGAEPAPFEDVIPDDDKDIVENEQFKLPEDNDWN.

A signal peptide spans 1-22; the sequence is MKLLGNSKYIFVVLLLCISVFL. A VWFA domain is found at 43–228; the sequence is DIHILLDGSG…NMIKPFLTKV (186 aa). The TSP type-1 domain occupies 235-281; it reads IAHCGKWEEWSECSTTCDEGRKIRRRQILHPGCVSEMTTPCKVRDCP. 3 disulfide bridges follow: cysteine 238–cysteine 267, cysteine 247–cysteine 275, and cysteine 251–cysteine 280. The tract at residues 278–761 is disordered; the sequence is RDCPQIPIPP…NKNQSKSNNG (484 aa). Low complexity predominate over residues 301 to 388; it reads EEPVNPNDPN…NNPNDPSNPN (88 aa). The 29 X 3 AA tandem repeats stretch occupies residues 306–392; the sequence is PNDPNDPNNP…DPSNPNNPNP (87 aa). Residues 392–407 show a composition bias toward basic residues; the sequence is PKKRNPKRRNPNKPKP. Residues 402-514 form a 20 tandem tetra-/hexapeptide repeats region; the sequence is PNKPKPNKPN…EPSNPNEPSN (113 aa). The segment covering 408-464 has biased composition (pro residues); that stretch reads NKPNPNKPNPNEPSNPNKPNPNEPSNPNKPNPNEPSNPNKPNPNEPSNPNKPNPNEP. Residues 465-567 are compositionally biased toward low complexity; sequence LNPNEPSNPN…KEPSNPNEPS (103 aa). 2 tandem repeats follow at residues 603-613 and 614-624. Positions 603 to 624 are 2 X 11 AA tandem repeats; the sequence is PEESNPKEPINPEESNPKEPIN. The segment covering 657 to 671 has biased composition (polar residues); sequence KGNNIPSNLPENPSD. Over residues 709-724 the composition is skewed to basic and acidic residues; sequence YKGHEERIPKPHRSND. The chain crosses the membrane as a helical span at residues 764 to 787; sequence IAGGIIGGLAILGCAGVGYNFIAG.

The protein localises to the cell membrane. In Plasmodium yoelii yoelii, this protein is Sporozoite surface protein 2 (SSP2).